The chain runs to 410 residues: tRNA-guanine(15) transglycosylase (410 aa).

Residue aspartate 87 is the Nucleophile of the active site. The substrate site is built by aspartate 122 and glycine 187.

Belongs to the archaeosine tRNA-ribosyltransferase family. Zn(2+) serves as cofactor.

The catalysed reaction is guanosine(15) in tRNA + 7-cyano-7-deazaguanine = 7-cyano-7-carbaguanosine(15) in tRNA + guanine. It participates in tRNA modification; archaeosine-tRNA biosynthesis. Its function is as follows. Exchanges the guanine residue with 7-cyano-7-deazaguanine (preQ0) at position 15 in the dihydrouridine loop (D-loop) of archaeal tRNAs. This Nanoarchaeum equitans (strain Kin4-M) protein is tRNA-guanine(15) transglycosylase.